The primary structure comprises 104 residues: L-rhamnose mutarotase (104 aa).

Tyrosine 18 is a substrate binding site. The active-site Proton donor is histidine 22. Residues tyrosine 41 and 76–77 (WW) contribute to the substrate site.

The protein belongs to the rhamnose mutarotase family. Homodimer.

The protein resides in the cytoplasm. The catalysed reaction is alpha-L-rhamnose = beta-L-rhamnose. The protein operates within carbohydrate metabolism; L-rhamnose metabolism. Its function is as follows. Involved in the anomeric conversion of L-rhamnose. This is L-rhamnose mutarotase from Salmonella dublin (strain CT_02021853).